Here is a 1499-residue protein sequence, read N- to C-terminus: DENN domain-containing protein 4B (1499 aa).

A disordered region spans residues 26–45 (PEEKWVPEPTGPLRPPRPAE). Residues 34–44 (PTGPLRPPRPA) are compositionally biased toward pro residues. Residues 44 to 203 (AEPITDVAVI…AVYLCYKVGL (160 aa)) form the MABP domain. The 175-residue stretch at 195-369 (VYLCYKVGLA…NVPFPSPQRP (175 aa)) folds into the uDENN domain. Positions 390-526 (PLPLSGASFL…PYKLLLATLT (137 aa)) constitute a cDENN domain. The dDENN domain maps to 528–644 (LYQQLDQTYT…ECSFGSARHA (117 aa)). Residues 717–744 (PQEQQGALPVPGPSRSAPSSPAPRRTKQ) are disordered. Residues 729–739 (PSRSAPSSPAP) show a composition bias toward low complexity. PPR repeat units follow at residues 775–811 (WFLC…VVLP) and 812–846 (DEVC…GIVP). Disordered regions lie at residues 890–968 (PLKD…ARGT), 988–1115 (PRGS…SLGS), and 1204–1226 (RPSA…APAP). The segment covering 897–915 (QQQQQQQQQQQKQQVAEQQ) has biased composition (low complexity). The span at 933–942 (RPLQRQTTWA) shows a compositional bias: polar residues. A Phosphoserine modification is found at S951. Residues 1074 to 1083 (IPPPELPSDL) are compositionally biased toward pro residues. S1090 carries the phosphoserine modification. The span at 1103–1115 (GSTASESSASLGS) shows a compositional bias: low complexity.

The protein localises to the golgi apparatus. Its function is as follows. Guanine nucleotide exchange factor (GEF) which may activate RAB10. Promotes the exchange of GDP to GTP, converting inactive GDP-bound Rab proteins into their active GTP-bound form. The protein is DENN domain-containing protein 4B (Dennd4b) of Mus musculus (Mouse).